The primary structure comprises 676 residues: UvrABC system protein B (676 aa).

The Helicase ATP-binding domain maps to 26-414 (EGLDAGLAHQ…SAGEIADQVV (389 aa)). 39-46 (GVTGSGKT) provides a ligand contact to ATP. The Beta-hairpin motif lies at 92–115 (YYDYYQPEAYVPTTDTFIEKDASV). The Helicase C-terminal domain maps to 432 to 598 (QVDDLLSEIR…ALKRNIKDIM (167 aa)). The UVR domain maps to 636 to 671 (EKEISRLEAAMYQHAQDLEFELAAEKRDEIEKLRAQ).

Belongs to the UvrB family. As to quaternary structure, forms a heterotetramer with UvrA during the search for lesions. Interacts with UvrC in an incision complex.

It localises to the cytoplasm. Its function is as follows. The UvrABC repair system catalyzes the recognition and processing of DNA lesions. A damage recognition complex composed of 2 UvrA and 2 UvrB subunits scans DNA for abnormalities. Upon binding of the UvrA(2)B(2) complex to a putative damaged site, the DNA wraps around one UvrB monomer. DNA wrap is dependent on ATP binding by UvrB and probably causes local melting of the DNA helix, facilitating insertion of UvrB beta-hairpin between the DNA strands. Then UvrB probes one DNA strand for the presence of a lesion. If a lesion is found the UvrA subunits dissociate and the UvrB-DNA preincision complex is formed. This complex is subsequently bound by UvrC and the second UvrB is released. If no lesion is found, the DNA wraps around the other UvrB subunit that will check the other stand for damage. In Vibrio parahaemolyticus serotype O3:K6 (strain RIMD 2210633), this protein is UvrABC system protein B.